Here is a 428-residue protein sequence, read N- to C-terminus: Putative aminotransferase MSMEG_6286/MSMEI_6121 (428 aa).

Glycine 37 lines the substrate pocket. Pyridoxal 5'-phosphate is bound by residues tyrosine 72, 102-105, asparagine 191, 222-225, and 256-258; these read ASLE, AYAV, and STS. Lysine 339 participates in a covalent cross-link: Isoglutamyl lysine isopeptide (Lys-Gln) (interchain with Q-Cter in protein Pup).

The protein belongs to the class-I pyridoxal-phosphate-dependent aminotransferase family. Pyridoxal 5'-phosphate serves as cofactor.

This is Putative aminotransferase MSMEG_6286/MSMEI_6121 from Mycolicibacterium smegmatis (strain ATCC 700084 / mc(2)155) (Mycobacterium smegmatis).